The chain runs to 325 residues: Bifunctional nuclease 2 (325 aa).

Residues 119 to 254 (CVHNNSQGRN…SLAYSDGIRS (136 aa)) enclose the BFN domain. Positions 285-320 (EAQEFGLIRNMLIAAVEERYKDAATWRDKLMLLRSK) constitute a UVR domain.

Belongs to the bifunctional nuclease family.

The protein localises to the nucleus. Bifunctional nuclease with both RNase and DNase activities. Involved in basal defense response. Participates in abscisic acid-derived callose deposition following infection by a necrotrophic pathogen. The sequence is that of Bifunctional nuclease 2 (BBD2) from Oryza sativa subsp. japonica (Rice).